We begin with the raw amino-acid sequence, 178 residues long: Inner membrane-spanning protein YciB (178 aa).

The next 5 membrane-spanning stretches (helical) occupy residues 10–30, 47–67, 76–96, 121–141, and 151–171; these read IVLF…AVLM, LQTM…LTLA, WKPT…LWAL, WAWI…VLHW, and LWGY…IAPH.

This sequence belongs to the YciB family.

The protein resides in the cell inner membrane. Plays a role in cell envelope biogenesis, maintenance of cell envelope integrity and membrane homeostasis. This Verminephrobacter eiseniae (strain EF01-2) protein is Inner membrane-spanning protein YciB.